A 207-amino-acid chain; its full sequence is Inner membrane-spanning protein YciB (207 aa).

The next 6 membrane-spanning stretches (helical) occupy residues 3–23 (FLFDLLPIVLFFVAFKVAEGQ), 51–71 (VLLATLVVIVATFAQIGWLLL), 78–98 (TMLWVSLGLVTVLGGATVWFH), 105–125 (WKPSVLYWVMGTAFWLSHAVF), 150–170 (FMWIAFFAFMGLANLYVAYSF), and 178–198 (FKLFGGVGLMLLFTLAQGLYL).

It belongs to the YciB family.

Its subcellular location is the cell inner membrane. Functionally, plays a role in cell envelope biogenesis, maintenance of cell envelope integrity and membrane homeostasis. This is Inner membrane-spanning protein YciB from Methylibium petroleiphilum (strain ATCC BAA-1232 / LMG 22953 / PM1).